The chain runs to 303 residues: Glutathione transport system permease protein GsiD (303 aa).

The next 6 helical transmembrane spans lie at 40 to 60, 105 to 125, 144 to 164, 165 to 185, 222 to 242, and 266 to 286; these read AMTA…ARWI, LAAG…LGLL, LFAF…GSGI, ANVI…LVRG, IVVF…SLSF, and VIAP…VLAF. Residues 101-290 enclose the ABC transmembrane type-1 domain; the sequence is AQISLAAGVF…LTVLAFNLLG (190 aa).

It belongs to the binding-protein-dependent transport system permease family. In terms of assembly, the complex is composed of two ATP-binding proteins (GsiA), two transmembrane proteins (GsiC and GsiD) and a solute-binding protein (GsiB).

The protein localises to the cell inner membrane. Part of the ABC transporter complex GsiABCD involved in glutathione import. Probably responsible for the translocation of the substrate across the membrane. The chain is Glutathione transport system permease protein GsiD from Escherichia coli O157:H7.